The sequence spans 378 residues: S-adenosylmethionine synthase (378 aa).

His-15 lines the ATP pocket. Asp-17 lines the Mg(2+) pocket. Glu-43 lines the K(+) pocket. Positions 56 and 99 each coordinate L-methionine. The flexible loop stretch occupies residues 99–109 (QSPDINQGINR). ATP-binding positions include 164 to 166 (DAK), 230 to 231 (RF), Asp-239, 245 to 246 (RK), Ala-262, and Lys-266. Asp-239 serves as a coordination point for L-methionine. Position 270 (Lys-270) interacts with L-methionine.

This sequence belongs to the AdoMet synthase family. Homotetramer; dimer of dimers. Requires Mg(2+) as cofactor. K(+) serves as cofactor.

The protein resides in the cytoplasm. The catalysed reaction is L-methionine + ATP + H2O = S-adenosyl-L-methionine + phosphate + diphosphate. It participates in amino-acid biosynthesis; S-adenosyl-L-methionine biosynthesis; S-adenosyl-L-methionine from L-methionine: step 1/1. Its function is as follows. Catalyzes the formation of S-adenosylmethionine (AdoMet) from methionine and ATP. The overall synthetic reaction is composed of two sequential steps, AdoMet formation and the subsequent tripolyphosphate hydrolysis which occurs prior to release of AdoMet from the enzyme. The chain is S-adenosylmethionine synthase from Buchnera aphidicola subsp. Acyrthosiphon pisum (strain 5A).